Consider the following 462-residue polypeptide: L-seryl-tRNA(Sec) selenium transferase (462 aa).

K294 is modified (N6-(pyridoxal phosphate)lysine).

It belongs to the SelA family. As to quaternary structure, homodecamer; pentamer of dimers. Binds only one seryl-tRNA(Sec) per dimer. It depends on pyridoxal 5'-phosphate as a cofactor.

It is found in the cytoplasm. The catalysed reaction is L-seryl-tRNA(Sec) + selenophosphate + H(+) = L-selenocysteinyl-tRNA(Sec) + phosphate. It participates in aminoacyl-tRNA biosynthesis; selenocysteinyl-tRNA(Sec) biosynthesis; selenocysteinyl-tRNA(Sec) from L-seryl-tRNA(Sec) (bacterial route): step 1/1. Its function is as follows. Converts seryl-tRNA(Sec) to selenocysteinyl-tRNA(Sec) required for selenoprotein biosynthesis. The protein is L-seryl-tRNA(Sec) selenium transferase of Yersinia pseudotuberculosis serotype O:1b (strain IP 31758).